Here is a 156-residue protein sequence, read N- to C-terminus: Protein-export protein SecB (156 aa).

Belongs to the SecB family. As to quaternary structure, homotetramer, a dimer of dimers. One homotetramer interacts with 1 SecA dimer.

It is found in the cytoplasm. Its function is as follows. One of the proteins required for the normal export of preproteins out of the cell cytoplasm. It is a molecular chaperone that binds to a subset of precursor proteins, maintaining them in a translocation-competent state. It also specifically binds to its receptor SecA. This chain is Protein-export protein SecB, found in Yersinia enterocolitica serotype O:8 / biotype 1B (strain NCTC 13174 / 8081).